Reading from the N-terminus, the 184-residue chain is ATP synthase subunit delta (184 aa).

It belongs to the ATPase delta chain family. As to quaternary structure, F-type ATPases have 2 components, F(1) - the catalytic core - and F(0) - the membrane proton channel. F(1) has five subunits: alpha(3), beta(3), gamma(1), delta(1), epsilon(1). CF(0) has four main subunits: a(1), b(1), b'(1) and c(10-14). The alpha and beta chains form an alternating ring which encloses part of the gamma chain. F(1) is attached to F(0) by a central stalk formed by the gamma and epsilon chains, while a peripheral stalk is formed by the delta, b and b' chains.

It localises to the cellular thylakoid membrane. In terms of biological role, f(1)F(0) ATP synthase produces ATP from ADP in the presence of a proton or sodium gradient. F-type ATPases consist of two structural domains, F(1) containing the extramembraneous catalytic core and F(0) containing the membrane proton channel, linked together by a central stalk and a peripheral stalk. During catalysis, ATP synthesis in the catalytic domain of F(1) is coupled via a rotary mechanism of the central stalk subunits to proton translocation. Its function is as follows. This protein is part of the stalk that links CF(0) to CF(1). It either transmits conformational changes from CF(0) to CF(1) or is implicated in proton conduction. This Nostoc punctiforme (strain ATCC 29133 / PCC 73102) protein is ATP synthase subunit delta.